A 469-amino-acid chain; its full sequence is Glutamate--tRNA ligase (469 aa).

The short motif at 11 to 21 (PSPTGFIHLGN) is the 'HIGH' region element. The segment covering 118-131 (GEKPRYDGTWRPEP) has biased composition (basic and acidic residues). The tract at residues 118 to 139 (GEKPRYDGTWRPEPGKVLPEPP) is disordered. Positions 243–247 (KMSKR) match the 'KMSKS' region motif. Residue K246 participates in ATP binding.

It belongs to the class-I aminoacyl-tRNA synthetase family. Glutamate--tRNA ligase type 1 subfamily. In terms of assembly, monomer.

The protein resides in the cytoplasm. The enzyme catalyses tRNA(Glu) + L-glutamate + ATP = L-glutamyl-tRNA(Glu) + AMP + diphosphate. Its function is as follows. Catalyzes the attachment of glutamate to tRNA(Glu) in a two-step reaction: glutamate is first activated by ATP to form Glu-AMP and then transferred to the acceptor end of tRNA(Glu). The protein is Glutamate--tRNA ligase of Burkholderia mallei (strain NCTC 10247).